The following is a 326-amino-acid chain: Nucleoporin Nup37 (326 aa).

WD repeat units lie at residues His-70–Tyr-117, Gly-122–Phe-162, Leu-164–Ser-203, and Gly-294–Glu-325.

Component of the Nup107-160 subcomplex of the nuclear pore complex (NPC). The Nup107-160 subcomplex includes NUP160, NUP133, NUP107, NUP98, NUP85, NUP43, NUP37, SEH1 and SEC13.

It localises to the chromosome. The protein resides in the centromere. It is found in the kinetochore. The protein localises to the nucleus. Its subcellular location is the nuclear pore complex. In terms of biological role, component of the Nup107-160 subcomplex of the nuclear pore complex (NPC). The Nup107-160 subcomplex is required for the assembly of a functional NPC. The Nup107-160 subcomplex is also required for normal kinetochore microtubule attachment, mitotic progression and chromosome segregation. The protein is Nucleoporin Nup37 (Nup37) of Mus musculus (Mouse).